The chain runs to 479 residues: (R)-1-hydroxy-2-aminoethylphosphonate ammonia-lyase (479 aa).

Lys317 carries the N6-(pyridoxal phosphate)lysine modification.

Belongs to the class-III pyridoxal-phosphate-dependent aminotransferase family. Pyridoxal 5'-phosphate serves as cofactor.

The enzyme catalyses (1R)-(2-amino-1-hydroxyethyl)phosphonate = phosphonoacetaldehyde + NH4(+). Functionally, involved in phosphonate degradation. Functions as a lyase that catalyzes an elimination reaction on the naturally occurring compound (R)-1-hydroxy-2-aminoethylphosphonate ((R)-HAEP), releasing ammonia and generating phosphonoacetaldehyde (PAA), which can be then hydrolyzed by PhnX, encoded by an adjacent gene. Thus, catalyzes a reaction that serves to funnel (R)-HAEP into the hydrolytic pathway for aminoethylphosphonate (AEP, the most common biogenic phosphonate) degradation, expanding the scope and the usefulness of the pathway itself. Is not active toward the (S) enantiomer of HAEP or other HAEP-related compounds such as ethanolamine and D,L-isoserine, indicating a very high substrate specificity. The polypeptide is (R)-1-hydroxy-2-aminoethylphosphonate ammonia-lyase (Vibrio splendidus (strain 12B01)).